A 297-amino-acid chain; its full sequence is Protease HtpX homolog (297 aa).

Residues Ile16–Val36 traverse the membrane as a helical segment. His134 is a binding site for Zn(2+). Glu135 is a catalytic residue. His138 contributes to the Zn(2+) binding site. 2 helical membrane-spanning segments follow: residues Met147–Phe167 and Ile175–Ile195. Glu200 is a binding site for Zn(2+).

This sequence belongs to the peptidase M48B family. Zn(2+) is required as a cofactor.

Its subcellular location is the cell inner membrane. This chain is Protease HtpX homolog, found in Hyphomonas neptunium (strain ATCC 15444).